The chain runs to 387 residues: 3-ketoacyl-CoA thiolase FadA (387 aa).

Catalysis depends on C91, which acts as the Acyl-thioester intermediate. Residues H343 and C373 each act as proton acceptor in the active site.

Belongs to the thiolase-like superfamily. Thiolase family. In terms of assembly, heterotetramer of two alpha chains (FadB) and two beta chains (FadA).

It is found in the cytoplasm. The enzyme catalyses an acyl-CoA + acetyl-CoA = a 3-oxoacyl-CoA + CoA. Its pathway is lipid metabolism; fatty acid beta-oxidation. Its function is as follows. Catalyzes the final step of fatty acid oxidation in which acetyl-CoA is released and the CoA ester of a fatty acid two carbons shorter is formed. Involved in the aerobic and anaerobic degradation of long-chain fatty acids. This chain is 3-ketoacyl-CoA thiolase FadA (fadA), found in Escherichia coli (strain K12).